We begin with the raw amino-acid sequence, 412 residues long: uncharacterized protein (412 aa).

A signal peptide spans 1 to 21 (MIIPMLRILLIVLFVLNLVTS). Disordered stretches follow at residues 85–134 (QPPA…STTT), 250–294 (STTE…TPGT), and 327–357 (VELG…HVRE). Residues 88-105 (ASLTSLPAAPPSAQVAPP) show a composition bias toward low complexity. A compositionally biased stretch (polar residues) spans 124 to 134 (TPQASISSTTT). Composition is skewed to low complexity over residues 250 to 259 (STTENTTEQS) and 266 to 293 (TTST…GTPG). The segment covering 330 to 347 (GEGDDDEENDDDSSEEEE) has biased composition (acidic residues). Residues 348 to 357 (TKPPARHVRE) show a composition bias toward basic and acidic residues. The ShKT domain occupies 371–408 (CDEEEDDKGKICKLWAAGGLCGTHKPTMFLFCRKTCLC).

This is an uncharacterized protein from Caenorhabditis elegans.